Reading from the N-terminus, the 122-residue chain is Small ribosomal subunit protein uS13 (122 aa).

The segment at 92–122 is disordered; it reads HRRGLPVRGQRTHTNARTRKGPAKPIAGKKK.

The protein belongs to the universal ribosomal protein uS13 family. In terms of assembly, part of the 30S ribosomal subunit. Forms a loose heterodimer with protein S19. Forms two bridges to the 50S subunit in the 70S ribosome.

In terms of biological role, located at the top of the head of the 30S subunit, it contacts several helices of the 16S rRNA. In the 70S ribosome it contacts the 23S rRNA (bridge B1a) and protein L5 of the 50S subunit (bridge B1b), connecting the 2 subunits; these bridges are implicated in subunit movement. Contacts the tRNAs in the A and P-sites. This chain is Small ribosomal subunit protein uS13, found in Paracoccus denitrificans (strain Pd 1222).